A 610-amino-acid chain; its full sequence is UvrABC system protein C (610 aa).

The region spanning 16 to 94 (SQPGVYRMYD…IKLYQPRYNV (79 aa)) is the GIY-YIG domain. The UVR domain maps to 204-239 (QQVLTQLISRMEEASRLLHFEDAARIRDQIQAVRRV).

Belongs to the UvrC family. In terms of assembly, interacts with UvrB in an incision complex.

The protein localises to the cytoplasm. The UvrABC repair system catalyzes the recognition and processing of DNA lesions. UvrC both incises the 5' and 3' sides of the lesion. The N-terminal half is responsible for the 3' incision and the C-terminal half is responsible for the 5' incision. The protein is UvrABC system protein C of Yersinia enterocolitica serotype O:8 / biotype 1B (strain NCTC 13174 / 8081).